We begin with the raw amino-acid sequence, 601 residues long: Ribosomal oxygenase 1 (601 aa).

Residues 1–11 (MAACGAEERQR) are compositionally biased toward basic and acidic residues. Residues 1-149 (MAACGAEERQ…PGGGGVPGLL (149 aa)) form a disordered region. The span at 61–70 (ERAAPPQGAA) shows a compositional bias: low complexity. The segment covering 73 to 87 (DRVERAGSSEAKQGD) has biased composition (basic and acidic residues). Residues 254 to 399 (CSLRLLSPQA…DFLEKLLPAA (146 aa)) form the JmjC domain. Fe cation contacts are provided by His300, Asp302, and His365.

It belongs to the ROX family. NO66 subfamily. Fe(2+) is required as a cofactor.

It is found in the nucleus. Its subcellular location is the nucleolus. It localises to the nucleoplasm. The enzyme catalyses N(6),N(6)-dimethyl-L-lysyl(36)-[histone H3] + 2 2-oxoglutarate + 2 O2 = L-lysyl(36)-[histone H3] + 2 formaldehyde + 2 succinate + 2 CO2. The catalysed reaction is N(6)-methyl-L-lysyl-[protein] + 2-oxoglutarate + O2 = L-lysyl-[protein] + formaldehyde + succinate + CO2. It catalyses the reaction L-histidyl-[protein] + 2-oxoglutarate + O2 = (3S)-3-hydroxy-L-histidyl-[protein] + succinate + CO2. Oxygenase that can act as both a histone lysine demethylase and a ribosomal histidine hydroxylase. Specifically demethylates 'Lys-4' (H3K4me) and 'Lys-36' (H3K36me) of histone H3, thereby playing a central role in histone code. Preferentially demethylates trimethylated H3 'Lys-4' (H3K4me3) and monomethylated H3 'Lys-4' (H3K4me1) residues, while it has weaker activity for dimethylated H3 'Lys-36' (H3K36me2). Also catalyzes demethylation of non-histone proteins. Also catalyzes the hydroxylation of 60S ribosomal protein L8 on 'His-216', thereby playing a role in ribosome biogenesis. The protein is Ribosomal oxygenase 1 (RIOX1) of Gallus gallus (Chicken).